Reading from the N-terminus, the 282-residue chain is 4-diphosphocytidyl-2-C-methyl-D-erythritol kinase (282 aa).

Lys8 is an active-site residue. 91–101 (PVAAGLAGGST) is an ATP binding site. The active site involves Asp133.

Belongs to the GHMP kinase family. IspE subfamily.

The enzyme catalyses 4-CDP-2-C-methyl-D-erythritol + ATP = 4-CDP-2-C-methyl-D-erythritol 2-phosphate + ADP + H(+). Its pathway is isoprenoid biosynthesis; isopentenyl diphosphate biosynthesis via DXP pathway; isopentenyl diphosphate from 1-deoxy-D-xylulose 5-phosphate: step 3/6. Catalyzes the phosphorylation of the position 2 hydroxy group of 4-diphosphocytidyl-2C-methyl-D-erythritol. The sequence is that of 4-diphosphocytidyl-2-C-methyl-D-erythritol kinase from Symbiobacterium thermophilum (strain DSM 24528 / JCM 14929 / IAM 14863 / T).